Here is a 482-residue protein sequence, read N- to C-terminus: tRNA sulfurtransferase (482 aa).

The region spanning 61-165 (KETLEVLTQT…NDKLNQVIER (105 aa)) is the THUMP domain. ATP-binding positions include 183-184 (LI), Lys-265, Gly-287, and Gln-296. Cysteines 344 and 456 form a disulfide. The 79-residue stretch at 404 to 482 (VAEHAVVLDI…GFHNVKVYRP (79 aa)) folds into the Rhodanese domain. Residue Cys-456 is the Cysteine persulfide intermediate of the active site.

This sequence belongs to the ThiI family.

It is found in the cytoplasm. The catalysed reaction is [ThiI sulfur-carrier protein]-S-sulfanyl-L-cysteine + a uridine in tRNA + 2 reduced [2Fe-2S]-[ferredoxin] + ATP + H(+) = [ThiI sulfur-carrier protein]-L-cysteine + a 4-thiouridine in tRNA + 2 oxidized [2Fe-2S]-[ferredoxin] + AMP + diphosphate. The enzyme catalyses [ThiS sulfur-carrier protein]-C-terminal Gly-Gly-AMP + S-sulfanyl-L-cysteinyl-[cysteine desulfurase] + AH2 = [ThiS sulfur-carrier protein]-C-terminal-Gly-aminoethanethioate + L-cysteinyl-[cysteine desulfurase] + A + AMP + 2 H(+). It participates in cofactor biosynthesis; thiamine diphosphate biosynthesis. In terms of biological role, catalyzes the ATP-dependent transfer of a sulfur to tRNA to produce 4-thiouridine in position 8 of tRNAs, which functions as a near-UV photosensor. Also catalyzes the transfer of sulfur to the sulfur carrier protein ThiS, forming ThiS-thiocarboxylate. This is a step in the synthesis of thiazole, in the thiamine biosynthesis pathway. The sulfur is donated as persulfide by IscS. This Vibrio atlanticus (strain LGP32) (Vibrio splendidus (strain Mel32)) protein is tRNA sulfurtransferase.